The chain runs to 513 residues: ATP synthase subunit alpha (513 aa).

Residue 169 to 176 (GDRQTGKT) participates in ATP binding.

It belongs to the ATPase alpha/beta chains family. F-type ATPases have 2 components, CF(1) - the catalytic core - and CF(0) - the membrane proton channel. CF(1) has five subunits: alpha(3), beta(3), gamma(1), delta(1), epsilon(1). CF(0) has three main subunits: a(1), b(2) and c(9-12). The alpha and beta chains form an alternating ring which encloses part of the gamma chain. CF(1) is attached to CF(0) by a central stalk formed by the gamma and epsilon chains, while a peripheral stalk is formed by the delta and b chains.

It is found in the cell inner membrane. It carries out the reaction ATP + H2O + 4 H(+)(in) = ADP + phosphate + 5 H(+)(out). Functionally, produces ATP from ADP in the presence of a proton gradient across the membrane. The alpha chain is a regulatory subunit. The sequence is that of ATP synthase subunit alpha from Bordetella avium (strain 197N).